A 420-amino-acid chain; its full sequence is Phosphoglycerate kinase (420 aa).

(2R)-3-phosphoglycerate contacts are provided by valine 26, aspartate 27, tyrosine 28, asparagine 29, glutamine 42, arginine 43, serine 66, histidine 67, glycine 69, arginine 70, leucine 125, arginine 126, histidine 173, and arginine 174. Tyrosine 199 carries the post-translational modification Phosphotyrosine. A Phosphoserine modification is found at serine 206. The tract at residues 209-228 is calmodulin binding; sequence KPFLAILGGAKVSDKIKLIE. Glycine 217 is a binding site for ADP. Residue glycine 217 coordinates CDP. Alanine 218 and lysine 219 together coordinate AMP. Alanine 218 serves as a coordination point for ATP. Alanine 218 serves as a coordination point for Mg(2+). CDP is bound at residue aspartate 222. Aspartate 222 is a binding site for Mg(2+). Lysine 223 is a binding site for AMP. Residue lysine 223 participates in ATP binding. Glycine 241 serves as a coordination point for ADP. Residue glycine 241 participates in CDP binding. Glycine 242 and glycine 316 together coordinate AMP. ATP contacts are provided by glycine 242 and glycine 316. 2 residues coordinate CDP: glycine 341 and phenylalanine 346. An ADP-binding site is contributed by phenylalanine 346. Glutamate 347 contributes to the AMP binding site. ATP is bound by residues glutamate 347, aspartate 378, and threonine 379. Residue aspartate 378 coordinates Mg(2+). Serine 393 is modified (phosphoserine).

This sequence belongs to the phosphoglycerate kinase family. In terms of assembly, monomer. Interacts with calmodulin in the presence of Ca(2+). Mg(2+) is required as a cofactor.

Its subcellular location is the cytoplasm. The enzyme catalyses (2R)-3-phosphoglycerate + ATP = (2R)-3-phospho-glyceroyl phosphate + ADP. The protein operates within carbohydrate degradation; glycolysis; pyruvate from D-glyceraldehyde 3-phosphate: step 2/5. This Dictyostelium discoideum (Social amoeba) protein is Phosphoglycerate kinase.